Consider the following 250-residue polypeptide: Pyrroloquinoline-quinone synthase (250 aa).

Belongs to the PqqC family.

The enzyme catalyses 6-(2-amino-2-carboxyethyl)-7,8-dioxo-1,2,3,4,7,8-hexahydroquinoline-2,4-dicarboxylate + 3 O2 = pyrroloquinoline quinone + 2 H2O2 + 2 H2O + H(+). Its pathway is cofactor biosynthesis; pyrroloquinoline quinone biosynthesis. Functionally, ring cyclization and eight-electron oxidation of 3a-(2-amino-2-carboxyethyl)-4,5-dioxo-4,5,6,7,8,9-hexahydroquinoline-7,9-dicarboxylic-acid to PQQ. The sequence is that of Pyrroloquinoline-quinone synthase from Xanthomonas campestris pv. campestris (strain B100).